The following is a 432-amino-acid chain: Trigger factor (432 aa).

Positions 161–246 constitute a PPIase FKBP-type domain; that stretch reads EDRVTIDFTG…LKKVEERELP (86 aa).

The protein belongs to the FKBP-type PPIase family. Tig subfamily. In terms of assembly, homodimer and monomer. In vivo most of the ribosomes are in complex with monomeric TF. Uncomplexed TF, however, is in a monomer-dimer equilibrium with approximately two thirds of TF existing in a dimeric state.

The protein localises to the cytoplasm. The catalysed reaction is [protein]-peptidylproline (omega=180) = [protein]-peptidylproline (omega=0). Involved in protein export. Acts as a chaperone by maintaining the newly synthesized protein in an open conformation. Functions as a peptidyl-prolyl cis-trans isomerase. The sequence is that of Trigger factor from Escherichia coli O6:K15:H31 (strain 536 / UPEC).